Consider the following 146-residue polypeptide: uncharacterized protein (146 aa).

The helical transmembrane segment at 7 to 24 threads the bilayer; the sequence is VIALFLVTGLTLYAIRLL.

It is found in the membrane. This is an uncharacterized protein from Haemophilus influenzae (strain ATCC 51907 / DSM 11121 / KW20 / Rd).